Here is a 223-residue protein sequence, read N- to C-terminus: uncharacterized protein (223 aa).

The signal sequence occupies residues 1–17; the sequence is MLGQGLIFISLAFVAHA. Asparagine 58 carries N-linked (GlcNAc...) asparagine glycosylation. The segment at 149–188 is disordered; the sequence is VRKKGSRPSKPQKEKQGNKQGSKTEESPNVDEDELESEPE. Residues 159 to 174 show a composition bias toward basic and acidic residues; sequence PQKEKQGNKQGSKTEE. Residues 176–187 are compositionally biased toward acidic residues; it reads PNVDEDELESEP. Residues 191 to 211 form a helical membrane-spanning segment; it reads TFFQKYGLYLIPILFLIIMSG.

Its subcellular location is the endoplasmic reticulum membrane. This is an uncharacterized protein from Schizosaccharomyces pombe (strain 972 / ATCC 24843) (Fission yeast).